Here is a 34-residue protein sequence, read N- to C-terminus: Photosystem II reaction center protein Psb30 (34 aa).

A helical transmembrane segment spans residues 6 to 26 (IVAQLLSLALVTLSGPAVIFL).

Belongs to the Psb30/Ycf12 family. PSII is composed of 1 copy each of membrane proteins PsbA, PsbB, PsbC, PsbD, PsbE, PsbF, PsbH, PsbI, PsbJ, PsbK, PsbL, PsbM, PsbT, PsbX, PsbY, PsbZ, Psb30/Ycf12, peripheral proteins of the oxygen-evolving complex and a large number of cofactors. It forms dimeric complexes.

Its subcellular location is the plastid. It is found in the chloroplast thylakoid membrane. Functionally, a core subunit of photosystem II (PSII), probably helps stabilize the reaction center. This chain is Photosystem II reaction center protein Psb30, found in Emiliania huxleyi (Coccolithophore).